The chain runs to 544 residues: Chaperonin GroEL (544 aa).

Residues 30 to 33 (TLGP), lysine 51, 87 to 91 (DGTTT), glycine 415, and aspartate 495 contribute to the ATP site.

It belongs to the chaperonin (HSP60) family. Forms a cylinder of 14 subunits composed of two heptameric rings stacked back-to-back. Interacts with the co-chaperonin GroES.

It is found in the cytoplasm. It catalyses the reaction ATP + H2O + a folded polypeptide = ADP + phosphate + an unfolded polypeptide.. Together with its co-chaperonin GroES, plays an essential role in assisting protein folding. The GroEL-GroES system forms a nano-cage that allows encapsulation of the non-native substrate proteins and provides a physical environment optimized to promote and accelerate protein folding. The sequence is that of Chaperonin GroEL from Neisseria gonorrhoeae (strain ATCC 700825 / FA 1090).